A 545-amino-acid chain; its full sequence is uncharacterized protein (545 aa).

Composition is skewed to basic and acidic residues over residues 34–44 and 53–63; these read PMNKQNEKLKT and PRNDYSRRVSR. Disordered regions lie at residues 34–98, 269–296, and 415–444; these read PMNK…PESN, QNGTAGYSNSRKTSSPSYHKQSIPPQDS, and ERPQRKTEHVKTPEENLQTKNPTTMTSAPE. The span at 69–78 shows a compositional bias: polar residues; the sequence is TDSSEQQITA. Basic and acidic residues predominate over residues 415–428; sequence ERPQRKTEHVKTPE. A compositionally biased stretch (polar residues) spans 429–441; it reads ENLQTKNPTTMTS.

This is an uncharacterized protein from Mus musculus (Mouse).